The following is an 847-amino-acid chain: Phenylalanine--tRNA ligase beta subunit (847 aa).

The tRNA-binding domain maps to 40–168 (FGIEGPVVVG…LDPEVGADAV (129 aa)). The B5 domain occupies 426-501 (ADAEPIRLPD…RIVGFDRIPS (76 aa)). Mg(2+)-binding residues include D479, D485, E488, and E489. The FDX-ACB domain maps to 753 to 846 (AGFPAATQDL…AGQLFGAAIR (94 aa)).

The protein belongs to the phenylalanyl-tRNA synthetase beta subunit family. Type 1 subfamily. As to quaternary structure, tetramer of two alpha and two beta subunits. Mg(2+) is required as a cofactor.

The protein resides in the cytoplasm. It carries out the reaction tRNA(Phe) + L-phenylalanine + ATP = L-phenylalanyl-tRNA(Phe) + AMP + diphosphate + H(+). The polypeptide is Phenylalanine--tRNA ligase beta subunit (Leifsonia xyli subsp. xyli (strain CTCB07)).